We begin with the raw amino-acid sequence, 248 residues long: Ribonuclease PH (248 aa).

Phosphate-binding positions include Arg86 and Gly124–Arg126.

Belongs to the RNase PH family. As to quaternary structure, homohexameric ring arranged as a trimer of dimers.

The catalysed reaction is tRNA(n+1) + phosphate = tRNA(n) + a ribonucleoside 5'-diphosphate. Phosphorolytic 3'-5' exoribonuclease that plays an important role in tRNA 3'-end maturation. Removes nucleotide residues following the 3'-CCA terminus of tRNAs; can also add nucleotides to the ends of RNA molecules by using nucleoside diphosphates as substrates, but this may not be physiologically important. Probably plays a role in initiation of 16S rRNA degradation (leading to ribosome degradation) during starvation. The protein is Ribonuclease PH of Clostridium perfringens (strain SM101 / Type A).